The sequence spans 215 residues: Ran-specific GTPase-activating protein 1 (215 aa).

Composition is skewed to basic and acidic residues over residues 1–18 (MSAE…EEQK) and 26–35 (VASKQTEEAK). Positions 1–78 (MSAEQEKKTQ…ASPEVHFEPI (78 aa)) are disordered. The residue at position 70 (Ser-70) is a Phosphoserine. The region spanning 74–210 (HFEPIVKLSA…FEKYQEENAK (137 aa)) is the RanBD1 domain.

The protein belongs to the RANBP1 family.

The protein localises to the cytoplasm. Stimulates the GTPase activity in the presence of RNA1. May potentiate the action of RanGAP1 (RNA1), thus playing the role of a negative regulator. This Schizosaccharomyces pombe (strain 972 / ATCC 24843) (Fission yeast) protein is Ran-specific GTPase-activating protein 1 (sbp1).